The following is a 345-amino-acid chain: Phosphoribosylformylglycinamidine cyclo-ligase (345 aa).

It belongs to the AIR synthase family.

It is found in the cytoplasm. It carries out the reaction 2-formamido-N(1)-(5-O-phospho-beta-D-ribosyl)acetamidine + ATP = 5-amino-1-(5-phospho-beta-D-ribosyl)imidazole + ADP + phosphate + H(+). It functions in the pathway purine metabolism; IMP biosynthesis via de novo pathway; 5-amino-1-(5-phospho-D-ribosyl)imidazole from N(2)-formyl-N(1)-(5-phospho-D-ribosyl)glycinamide: step 2/2. This chain is Phosphoribosylformylglycinamidine cyclo-ligase, found in Shewanella sediminis (strain HAW-EB3).